A 597-amino-acid chain; its full sequence is Protein disulfide isomerase-like 1-4 (597 aa).

The N-terminal stretch at 1–25 (MAFRVLLLFSLTALLIFSAVSPSFA) is a signal peptide. 2 stretches are compositionally biased toward acidic residues: residues 37–49 (LSFL…DDVP) and 61–84 (DEFE…EGDF). Residues 37–101 (LSFLEDLKED…SDPLPTPEID (65 aa)) form a disordered region. The Thioredoxin 1 domain maps to 85–208 (SDLGNPDSDP…IVTWVKKKIG (124 aa)). N-linked (GlcNAc...) asparagine glycosylation occurs at Asn112. Catalysis depends on nucleophile residues Cys132 and Cys135. Cys132 and Cys135 form a disulfide bridge. 2 N-linked (GlcNAc...) asparagine glycosylation sites follow: Asn213 and Asn342. One can recognise a Thioredoxin 2 domain in the interval 429-550 (FYKSDPIPEK…FYKFLRKHAT (122 aa)). Residues Cys471 and Cys474 each act as nucleophile in the active site. Cys471 and Cys474 form a disulfide bridge. Asn524 is a glycosylation site (N-linked (GlcNAc...) asparagine). The interval 555-597 (LEKPASTESPKTAESTPKVETTETKESPDSTTKSSQSDSKDEL) is disordered. A compositionally biased stretch (polar residues) spans 560 to 573 (STESPKTAESTPKV). The short motif at 594–597 (KDEL) is the Prevents secretion from ER element.

Belongs to the protein disulfide isomerase family. As to quaternary structure, interacts with MEE8 and MED37A. Expressed in germinating seedling, including the cotyledons and hypocotyl, in vascular tissues, in pollen grains, root tips, leaf trichomes, developing seeds and siliques.

It localises to the endoplasmic reticulum lumen. Its subcellular location is the golgi apparatus. The protein localises to the vacuole. The protein resides in the nucleus. It is found in the secreted. It localises to the cell wall. It catalyses the reaction Catalyzes the rearrangement of -S-S- bonds in proteins.. Functionally, acts as a protein-folding catalyst that interacts with nascent polypeptides to catalyze the formation, isomerization, and reduction or oxidation of disulfide bonds. This chain is Protein disulfide isomerase-like 1-4 (PDIL1-4), found in Arabidopsis thaliana (Mouse-ear cress).